The primary structure comprises 519 residues: Ent-kaurene oxidase (519 aa).

The Chloroplast intermembrane segment spans residues M1 to V10. The chain crosses the membrane as a helical span at residues P11–I31. At R32–S519 the chain is on the cytoplasmic side. C458 provides a ligand contact to heme.

This sequence belongs to the cytochrome P450 family. Requires heme as cofactor.

It is found in the plastid. Its subcellular location is the chloroplast outer membrane. The catalysed reaction is ent-kaur-16-ene + 3 reduced [NADPH--hemoprotein reductase] + 3 O2 = ent-kaur-16-en-19-oate + 3 oxidized [NADPH--hemoprotein reductase] + 4 H2O + 4 H(+). The protein operates within plant hormone biosynthesis; gibberellin biosynthesis. Functionally, catalyzes three successive oxidations of the 4-methyl group of ent-kaurene giving kaurenoic acid, a key step in gibberellins (GAs) biosynthesis. GAs, which are involved many processes, including stem elongation, play a central role in plant development. In Salvia miltiorrhiza (Chinese sage), this protein is Ent-kaurene oxidase.